Here is a 682-residue protein sequence, read N- to C-terminus: Potassium-transporting ATPase ATP-binding subunit (682 aa).

A run of 4 helical transmembrane segments spans residues 34-54, 62-82, 219-239, and 254-274; these read PVMF…IAMA, ALFS…ANFA, IALT…TATL, and VLVA…LSAI. Catalysis depends on Asp307, which acts as the 4-aspartylphosphate intermediate. ATP is bound by residues Asp344, Glu348, 377-384, and Lys395; that span reads FTAQSRMS. Positions 518 and 522 each coordinate Mg(2+). Transmembrane regions (helical) follow at residues 588–608, 616–636, and 656–676; these read FAII…LNIM, AILS…PLAL, and IYGL…DLLL.

This sequence belongs to the cation transport ATPase (P-type) (TC 3.A.3) family. Type IA subfamily. In terms of assembly, the system is composed of three essential subunits: KdpA, KdpB and KdpC.

It is found in the cell inner membrane. The catalysed reaction is K(+)(out) + ATP + H2O = K(+)(in) + ADP + phosphate + H(+). In terms of biological role, part of the high-affinity ATP-driven potassium transport (or Kdp) system, which catalyzes the hydrolysis of ATP coupled with the electrogenic transport of potassium into the cytoplasm. This subunit is responsible for energy coupling to the transport system and for the release of the potassium ions to the cytoplasm. The polypeptide is Potassium-transporting ATPase ATP-binding subunit (Escherichia coli O157:H7 (strain EC4115 / EHEC)).